We begin with the raw amino-acid sequence, 312 residues long: Olfactory receptor 6C76 (312 aa).

Residues 1-23 (MKNRTSVTDFILLGLTDNPQLQV) are Extracellular-facing. Asn3 is a glycosylation site (N-linked (GlcNAc...) asparagine). A helical transmembrane segment spans residues 24-44 (VIFSFLFLTYVLSVTGNLTII). At 45–57 (SLTLLDSHLKTPM) the chain is on the cytoplasmic side. A helical transmembrane segment spans residues 58–80 (YFFLRNFSLEISFTSVCNPRFLI). Residues 81–94 (SILTGDKSISYNAC) are Extracellular-facing. Cys94 and Cys176 are oxidised to a cystine. The chain crosses the membrane as a helical span at residues 95 to 115 (AAQLFFFIFLGSTEFFLLASM). Over 116 to 142 (SYDCYVAICKPLHYTTIMSDRICYQLI) the chain is Cytoplasmic. Residues 143-163 (ISSWLAGFLVIFPPLAMGLQL) traverse the membrane as a helical segment. At 164 to 195 (DFCDSNVIDHFTCDSAPLLQISCTDTSTLELM) the chain is on the extracellular side. Residues 196 to 216 (SFILALFTLISTLILVILSYT) traverse the membrane as a helical segment. Residues 217–238 (YIIRTILRIPSAQQRKKAFSTC) are Cytoplasmic-facing. Residues 239 to 259 (SSHVIVVSISYGSCIFMYVKT) traverse the membrane as a helical segment. Over 260–267 (SAKEGVAL) the chain is Extracellular. The chain crosses the membrane as a helical span at residues 268–288 (TKGVAILNTSVAPMLNPFIYT). Residues 289 to 312 (LRNQQVKQAFKDVLRKISHKKKKH) lie on the Cytoplasmic side of the membrane.

The protein belongs to the G-protein coupled receptor 1 family.

The protein localises to the cell membrane. Functionally, odorant receptor. This chain is Olfactory receptor 6C76 (OR6C76), found in Homo sapiens (Human).